The following is a 169-amino-acid chain: Large ribosomal subunit protein uL10 (169 aa).

This sequence belongs to the universal ribosomal protein uL10 family. As to quaternary structure, part of the ribosomal stalk of the 50S ribosomal subunit. The N-terminus interacts with L11 and the large rRNA to form the base of the stalk. The C-terminus forms an elongated spine to which L12 dimers bind in a sequential fashion forming a multimeric L10(L12)X complex.

Its function is as follows. Forms part of the ribosomal stalk, playing a central role in the interaction of the ribosome with GTP-bound translation factors. The chain is Large ribosomal subunit protein uL10 from Deinococcus geothermalis (strain DSM 11300 / CIP 105573 / AG-3a).